The following is a 141-amino-acid chain: Hemoglobin subunit alpha-A (141 aa).

In terms of domain architecture, Globin spans 1–141 (VLSAADKTNV…VGTVLTAKYR (141 aa)). O2 is bound at residue His58. Residue His87 participates in heme b binding.

It belongs to the globin family. As to quaternary structure, heterotetramer of two alpha chains and two beta chains. As to expression, red blood cells.

Functionally, involved in oxygen transport from the lung to the various peripheral tissues. In Turdus merula (Common blackbird), this protein is Hemoglobin subunit alpha-A (HBAA).